A 307-amino-acid polypeptide reads, in one-letter code: Ubiquinol oxidase subunit 2 (307 aa).

A signal peptide spans 1–23 (MKNKLLARVARLGGLSSALLLAG). Residue cysteine 24 is the site of N-palmitoyl cysteine attachment. A lipid anchor (S-diacylglycerol cysteine) is attached at cysteine 24. The next 2 helical transmembrane spans lie at 46-66 (STVAMLIVVIPTILETLLFAW) and 87-107 (IEVTIWGVPSLIILFLAVITY).

It belongs to the cytochrome c oxidase subunit 2 family. As to quaternary structure, heterotetramer of the subunits 1, 2, 3 and 4.

It is found in the cell membrane. This Acetobacter aceti protein is Ubiquinol oxidase subunit 2 (cyaB).